A 63-amino-acid polypeptide reads, in one-letter code: uncharacterized protein (63 aa).

This is an uncharacterized protein from Orgyia pseudotsugata (Douglas-fir tussock moth).